A 393-amino-acid chain; its full sequence is MKHKVSKRVISLKWVPFLCISFFALGAIFTSRSWEPSSDSGSQLISQHHRDHELQIVSDDCAHNKKATQEKDVTGEVLRTHEAIQDDRSLDKSVSTLSSTRSSQEMVDGSETNPRKKVFMVMGINTAFSSRKRRDSVRETWMPQGEKLERLEQEKGIVIKFMIGHSATSNSILDRAIDSEDAQHKDFLRLEHVEGYHELSAKTKIFFSTAVAKWDAEFYIKVDDDVHVNLGMLASTLARHRSKPRVYIGCMKSGPVLAQNLLNCFRTVKYHEPEYWKFGEDGNKYFRHATGQIYAISKDLANYISINQPILHKYANEDVSLGSWFIGLEVEHIDDRNFCCGTPPDCRWKAEAGDVCVASFEWSCSGICKSVERMKIVHEVCSEGEGAVWNTLL.

The helical; Signal-anchor for type II membrane protein transmembrane segment at 9-29 (VISLKWVPFLCISFFALGAIF) threads the bilayer. The tract at residues 89–112 (SLDKSVSTLSSTRSSQEMVDGSET) is disordered. Residues 93–103 (SVSTLSSTRSS) show a composition bias toward low complexity.

The protein belongs to the glycosyltransferase 31 family. Mn(2+) is required as a cofactor. In terms of tissue distribution, expressed in leaves, stems, flowers and siliques.

It is found in the golgi apparatus membrane. It participates in protein modification; protein glycosylation. Its function is as follows. Beta-1,3-galactosyltransferase that transfers galactose from UDP-galactose to substrates with a terminal glycosyl residue. This Arabidopsis thaliana (Mouse-ear cress) protein is Beta-1,3-galactosyltransferase 7 (B3GALT7).